Here is a 154-residue protein sequence, read N- to C-terminus: Transmembrane protein 35B (154 aa).

Positions 1-22 (MALLLSVLRVLLGGFFALVGLA) are cleaved as a signal peptide. A run of 3 helical transmembrane segments spans residues 63–83 (IAVGFLELLAGLLLVMGPPML), 85–105 (EISNLFLILLMMGAIFTLAAL), and 112–132 (CIPAIVCLGFLLLLNVGQLLA).

Belongs to the DoxX family.

It is found in the membrane. This chain is Transmembrane protein 35B, found in Homo sapiens (Human).